Here is a 464-residue protein sequence, read N- to C-terminus: Nuclear distribution protein nudF 2 (464 aa).

Residues 9–41 enclose the LisH domain; the sequence is QAAELNKSIIAYLSAHGLAETLAAFRKESDFPD. A coiled-coil region spans residues 63-88; sequence NSTLMKKLLALESHNKALRNELNSTR. WD repeat units lie at residues 112–151, 154–195, 199–238, 241–280, 285–343, 344–383, 388–424, and 426–464; these read SHRD…LERT, GHTM…KNVK, GHDH…RVKT, DHTG…PICK, GHEN…MTLT, GHAS…RCVK, AHDG…AELP, and SKLD…RSHK.

This sequence belongs to the WD repeat LIS1/nudF family. As to quaternary structure, self-associates. Interacts with nudE and dynein.

Its subcellular location is the cytoplasm. The protein resides in the cytoskeleton. It is found in the spindle pole. Functionally, positively regulates the activity of the minus-end directed microtubule motor protein dynein. May enhance dynein-mediated microtubule sliding by targeting dynein to the microtubule plus end. Required for nuclear migration during vegetative growth as well as development. Required for retrograde early endosome (EE) transport from the hyphal tip. Required for localization of dynein to the mitotic spindle poles. Recruits additional proteins to the dynein complex at SPBs. The chain is Nuclear distribution protein nudF 2 from Penicillium rubens (strain ATCC 28089 / DSM 1075 / NRRL 1951 / Wisconsin 54-1255) (Penicillium chrysogenum).